Consider the following 150-residue polypeptide: Large ribosomal subunit protein bL9 (150 aa).

Belongs to the bacterial ribosomal protein bL9 family.

Its function is as follows. Binds to the 23S rRNA. The polypeptide is Large ribosomal subunit protein bL9 (Burkholderia thailandensis (strain ATCC 700388 / DSM 13276 / CCUG 48851 / CIP 106301 / E264)).